Here is a 1048-residue protein sequence, read N- to C-terminus: Dyslexia-associated protein KIAA0319-like protein (1048 aa).

The Cytoplasmic segment spans residues 1-29 (MEKRLGVKPSPASWVLPGYCWQTSVKLPR). The helical transmembrane segment at 30–50 (SLYLLYSFFCFSVLWLSTDAD) threads the bilayer. Residues 49–127 (ADESRCQQGK…PFRTDSSNSM (79 aa)) form the MANSC domain. Over 51 to 928 (ESRCQQGKTL…RDGDSNCEWS (878 aa)) the chain is Extracellular. 2 disordered regions span residues 198 to 218 (HGAM…LSPT) and 231 to 300 (SFTS…STSA). Over residues 231–241 (SFTSNHTTQTP) the composition is skewed to polar residues. The N-linked (GlcNAc...) asparagine glycan is linked to N246. Low complexity-rich tracts occupy residues 247 to 261 (VSIH…SPVS) and 287 to 300 (ATPT…STSA). PKD domains are found at residues 309–400 (VVSA…VKPE), 408–497 (VAVV…VNKA), 503–593 (VANA…VQPE), 599–687 (QADA…VKEE), and 693–784 (VAKI…VKPD). Residue N394 is glycosylated (N-linked (GlcNAc...) asparagine). Positions 593–623 (ENNKPPQADAGPDKELTLPVDSTTLDGSKST) are disordered. The helical transmembrane segment at 929-949 (VLYVIIASFVIVVALGILSWT) threads the bilayer. Over 950 to 1048 (TICCCKRQKG…KSRSAREEIL (99 aa)) the chain is Cytoplasmic. T973 is modified (phosphothreonine). Phosphoserine is present on S977. The tract at residues 980 to 1007 (LKPTSRAGSKQKGPTLSSSLMHSESELD) is disordered. Residues 985 to 994 (RAGSKQKGPT) are compositionally biased toward polar residues. 2 positions are modified to phosphoserine: S1008 and S1030. The tract at residues 1024–1048 (LYGQNGSVPNGQTPLKSRSAREEIL) is disordered. Over residues 1027 to 1039 (QNGSVPNGQTPLK) the composition is skewed to polar residues. T1036 bears the Phosphothreonine mark.

As to quaternary structure, interacts with RTN4R. Post-translationally, N-glycosylated.

Its subcellular location is the cytoplasmic granule membrane. The protein resides in the golgi apparatus membrane. It localises to the golgi apparatus. It is found in the trans-Golgi network membrane. The protein localises to the cell membrane. Functionally, possible role in axon guidance through interaction with RTN4R. In terms of biological role, (Microbial infection) Acts as a receptor for adeno-associated virus and is involved in adeno-associated virus infection through endocytosis system. This chain is Dyslexia-associated protein KIAA0319-like protein, found in Mus musculus (Mouse).